Consider the following 320-residue polypeptide: L-lactate dehydrogenase 2 (320 aa).

Residues 18 to 19, Asp-40, and Arg-45 contribute to the NAD(+) site; that span reads AV. Substrate is bound by residues Gln-88, Arg-94, and 126–129; that span reads NPVD. Residues 124–126 and Ser-149 each bind NAD(+); that span reads ITN. 154 to 157 is a substrate binding site; sequence DSAR. Beta-D-fructose 1,6-bisphosphate-binding positions include Arg-159 and 171–176; that span reads KNVHAY. His-181 (proton acceptor) is an active-site residue. Tyr-228 is modified (phosphotyrosine). Thr-237 provides a ligand contact to substrate.

Belongs to the LDH/MDH superfamily. LDH family. As to quaternary structure, homotetramer.

It localises to the cytoplasm. It catalyses the reaction (S)-lactate + NAD(+) = pyruvate + NADH + H(+). Its pathway is fermentation; pyruvate fermentation to lactate; (S)-lactate from pyruvate: step 1/1. With respect to regulation, allosterically activated by fructose 1,6-bisphosphate (FBP). Its function is as follows. Catalyzes the conversion of lactate to pyruvate. In Bifidobacterium longum subsp. longum (strain ATCC 15707 / DSM 20219 / JCM 1217 / NCTC 11818 / E194b), this protein is L-lactate dehydrogenase 2.